The primary structure comprises 234 residues: Proteasome subunit alpha type-6 (234 aa).

Residue Ser-14 is modified to Phosphoserine. Lys-191 is covalently cross-linked (Glycyl lysine isopeptide (Lys-Gly) (interchain with G-Cter in ubiquitin)).

It belongs to the peptidase T1A family. In terms of assembly, the 26S proteasome consists of a 20S proteasome core and two 19S regulatory subunits. The 20S proteasome core is composed of 28 subunits that are arranged in four stacked rings, resulting in a barrel-shaped structure. The two end rings are each formed by seven alpha subunits, and the two central rings are each formed by seven beta subunits. The catalytic chamber with the active sites is on the inside of the barrel.

It localises to the cytoplasm. The protein localises to the nucleus. In terms of biological role, the proteasome degrades poly-ubiquitinated proteins in the cytoplasm and in the nucleus. It is essential for the regulated turnover of proteins and for the removal of misfolded proteins. The proteasome is a multicatalytic proteinase complex that is characterized by its ability to cleave peptides with Arg, Phe, Tyr, Leu, and Glu adjacent to the leaving group at neutral or slightly basic pH. It has an ATP-dependent proteolytic activity. The protein is Proteasome subunit alpha type-6 (PRE5) of Saccharomyces cerevisiae (strain ATCC 204508 / S288c) (Baker's yeast).